We begin with the raw amino-acid sequence, 84 residues long: Small ribosomal subunit protein uS17 (84 aa).

This sequence belongs to the universal ribosomal protein uS17 family. In terms of assembly, part of the 30S ribosomal subunit.

In terms of biological role, one of the primary rRNA binding proteins, it binds specifically to the 5'-end of 16S ribosomal RNA. The chain is Small ribosomal subunit protein uS17 from Borreliella afzelii (strain PKo) (Borrelia afzelii).